Consider the following 77-residue polypeptide: Small ribosomal subunit protein bS18 (77 aa).

This sequence belongs to the bacterial ribosomal protein bS18 family. In terms of assembly, part of the 30S ribosomal subunit. Forms a tight heterodimer with protein bS6.

Binds as a heterodimer with protein bS6 to the central domain of the 16S rRNA, where it helps stabilize the platform of the 30S subunit. In Halalkalibacterium halodurans (strain ATCC BAA-125 / DSM 18197 / FERM 7344 / JCM 9153 / C-125) (Bacillus halodurans), this protein is Small ribosomal subunit protein bS18.